An 831-amino-acid chain; its full sequence is Isethionate sulfite-lyase (831 aa).

Residues 32-701 (PRVFRLLERF…VVSATPNGRT (670 aa)) form the PFL domain. 2-hydroxyethane-1-sulfonate-binding positions include R189, Q193, 468 to 470 (CTE), and R679. Catalysis depends on C468, which acts as the Cysteine radical intermediate. E470 acts as the Proton acceptor in catalysis. The 124-residue stretch at 708 to 831 (DGSSASHGAD…LIARTEHDVM (124 aa)) folds into the Glycine radical domain. At G806 the chain carries Glycine radical.

Belongs to the glycyl radical enzyme (GRE) family. As to quaternary structure, homodimer. Requires the activating protein IslB to generate the key active site glycyl radical on Gly-806 that is involved in catalysis.

The catalysed reaction is 2-hydroxyethane-1-sulfonate = acetaldehyde + sulfite + H(+). The protein operates within organosulfur degradation; alkanesulfonate degradation. Its function is as follows. Involved in an anaerobic respiration pathway that converts the sulfonate isethionate (2-hydroxyethanesulfonate) to ammonia, acetate and sulfide. Catalyzes the radical-mediated C-S bond cleavage of isethionate (2-hydroxyethanesulfonate) to form sulfite and acetaldehyde. This chain is Isethionate sulfite-lyase, found in Desulfovibrio desulfuricans (strain ATCC 27774 / DSM 6949 / MB).